The chain runs to 519 residues: Protein nucleotidyltransferase YdiU (519 aa).

Gly101, Gly103, Arg104, Lys123, Asp135, Gly136, Arg193, and Arg200 together coordinate ATP. The Proton acceptor role is filled by Asp271. Residues Asn272 and Asp281 each contribute to the Mg(2+) site. Asp281 is a binding site for ATP.

The protein belongs to the SELO family. It depends on Mg(2+) as a cofactor. The cofactor is Mn(2+).

The enzyme catalyses L-seryl-[protein] + ATP = 3-O-(5'-adenylyl)-L-seryl-[protein] + diphosphate. It carries out the reaction L-threonyl-[protein] + ATP = 3-O-(5'-adenylyl)-L-threonyl-[protein] + diphosphate. The catalysed reaction is L-tyrosyl-[protein] + ATP = O-(5'-adenylyl)-L-tyrosyl-[protein] + diphosphate. It catalyses the reaction L-histidyl-[protein] + UTP = N(tele)-(5'-uridylyl)-L-histidyl-[protein] + diphosphate. The enzyme catalyses L-seryl-[protein] + UTP = O-(5'-uridylyl)-L-seryl-[protein] + diphosphate. It carries out the reaction L-tyrosyl-[protein] + UTP = O-(5'-uridylyl)-L-tyrosyl-[protein] + diphosphate. Functionally, nucleotidyltransferase involved in the post-translational modification of proteins. It can catalyze the addition of adenosine monophosphate (AMP) or uridine monophosphate (UMP) to a protein, resulting in modifications known as AMPylation and UMPylation. The sequence is that of Protein nucleotidyltransferase YdiU from Tolumonas auensis (strain DSM 9187 / NBRC 110442 / TA 4).